The primary structure comprises 319 residues: Large ribosomal subunit protein uL29m (319 aa).

Residues 1–55 (MWKRSFHSQGGPLRARTKFTKPKPKQPVLPKDKIRPPTQLTHHSNNLRITEPIPP) form a disordered region. A compositionally biased stretch (basic residues) spans 15–24 (ARTKFTKPKP). Residues 38 to 48 (TQLTHHSNNLR) show a composition bias toward polar residues.

This sequence belongs to the universal ribosomal protein uL29 family. As to quaternary structure, component of the mitochondrial large ribosomal subunit. Mature mitochondrial ribosomes consist of a small (37S) and a large (54S) subunit. The 37S subunit contains at least 33 different proteins and 1 molecule of RNA (15S). The 54S subunit contains at least 45 different proteins and 1 molecule of RNA (21S).

The protein localises to the mitochondrion. This chain is Large ribosomal subunit protein uL29m (MRPL4), found in Saccharomyces cerevisiae (strain YJM789) (Baker's yeast).